The sequence spans 125 residues: Prepro-urotensin II-gamma (125 aa).

The first 21 residues, 1–21 (MMCNLLLSCSVLLLSCSHLLA), serve as a signal peptide directing secretion. The propeptide occupies 109 to 111 (QFR). Cys119 and Cys124 are joined by a disulfide.

The protein belongs to the urotensin-2 family.

Its subcellular location is the secreted. Urotensin is found in the teleost caudal neurosecretory system. It has a suggested role in osmoregulation and as a corticotropin-releasing factor. The non-hormonal portion of this precursor may be a urotensin binding protein, urophysin. This Cyprinus carpio (Common carp) protein is Prepro-urotensin II-gamma.